A 378-amino-acid polypeptide reads, in one-letter code: Ribosomal RNA large subunit methyltransferase G (378 aa).

The protein belongs to the methyltransferase superfamily. RlmG family.

It localises to the cytoplasm. The enzyme catalyses guanosine(1835) in 23S rRNA + S-adenosyl-L-methionine = N(2)-methylguanosine(1835) in 23S rRNA + S-adenosyl-L-homocysteine + H(+). Specifically methylates the guanine in position 1835 (m2G1835) of 23S rRNA. The chain is Ribosomal RNA large subunit methyltransferase G from Shigella flexneri serotype 5b (strain 8401).